A 138-amino-acid polypeptide reads, in one-letter code: Transcriptional activator protein (138 aa).

Low complexity predominate over residues 1 to 20 (MTGSKKTPSTSPSKKLSSPP). The disordered stretch occupies residues 1-23 (MTGSKKTPSTSPSKKLSSPPEVK). A Nuclear localization signal motif is present at residues 23-37 (KLRHRFAKRQIRRRR). The segment at 42-59 (CGCSIYIHINCVNNGFTH) is a zinc-finger region. Residues 85-106 (NTASGDANVHTQPGISHSSQSK) are compositionally biased toward polar residues. Residues 85-123 (NTASGDANVHTQPGISHSSQSKPQHEDSVGSPQSLLQLP) form a disordered region. Positions 113–123 (VGSPQSLLQLP) are enriched in low complexity. Positions 124–138 (SLDDVDDDFWADLLK) are transactivation.

It belongs to the geminiviridae transcriptional activator protein family. Monomer. Homodimer. Homooligomer. Self-interaction correlates with nuclear localization and efficient activation of transcription. Monomers suppress local silencing by interacting with and inactivating host adenosine kinase 2 (ADK2) in the cytoplasm. Interacts with and inhibits host SNF1 kinase. Binds to ssDNA. Post-translationally, phosphorylated.

The protein resides in the host nucleus. The protein localises to the host cytoplasm. Strong activator of the late viral genes promoters. Enhances the expression of the capsid protein and nuclear shuttle protein. Acts as a suppressor of RNA-mediated gene silencing, also known as post-transcriptional gene silencing (PTGS), a mechanism of plant viral defense that limits the accumulation of viral RNAs. Suppresses the host RNA silencing by inhibiting adenosine kinase 2 (ADK2), a kinase involved in a general methylation pathway. Also suppresses the host basal defense by interacting with and inhibiting SNF1 kinase, a key regulator of cell metabolism implicated in innate antiviral defense. Determines pathogenicity. This Pepper huasteco yellow vein virus (PHYVV) protein is Transcriptional activator protein.